The chain runs to 424 residues: Tol-Pal system protein TolB (424 aa).

An N-terminal signal peptide occupies residues 1–24 (MNKARAIARWISFLLLIAAGQVCA).

Belongs to the TolB family. The Tol-Pal system is composed of five core proteins: the inner membrane proteins TolA, TolQ and TolR, the periplasmic protein TolB and the outer membrane protein Pal. They form a network linking the inner and outer membranes and the peptidoglycan layer.

The protein resides in the periplasm. Its function is as follows. Part of the Tol-Pal system, which plays a role in outer membrane invagination during cell division and is important for maintaining outer membrane integrity. The sequence is that of Tol-Pal system protein TolB from Methylococcus capsulatus (strain ATCC 33009 / NCIMB 11132 / Bath).